Here is a 146-residue protein sequence, read N- to C-terminus: Prefoldin subunit alpha 1 (146 aa).

It belongs to the prefoldin subunit alpha family. As to quaternary structure, heterohexamer of two alpha and four beta subunits.

The protein resides in the cytoplasm. In terms of biological role, molecular chaperone capable of stabilizing a range of proteins. Seems to fulfill an ATP-independent, HSP70-like function in archaeal de novo protein folding. The polypeptide is Prefoldin subunit alpha 1 (Thermococcus kodakarensis (strain ATCC BAA-918 / JCM 12380 / KOD1) (Pyrococcus kodakaraensis (strain KOD1))).